The chain runs to 383 residues: D-alanine--D-alanine ligase (383 aa).

Residues 169–373 (KALLRAAGLP…YPQLVDRLVR (205 aa)) enclose the ATP-grasp domain. 196–251 (QERLGLPVFVKPARGGSSIGISRVEAWADLDTAIKAARASDPKVLVESAIVGREIE) provides a ligand contact to ATP. Residues aspartate 327, glutamate 340, and asparagine 342 each coordinate Mg(2+).

It belongs to the D-alanine--D-alanine ligase family. Requires Mg(2+) as cofactor. The cofactor is Mn(2+).

The protein localises to the cytoplasm. It catalyses the reaction 2 D-alanine + ATP = D-alanyl-D-alanine + ADP + phosphate + H(+). The protein operates within cell wall biogenesis; peptidoglycan biosynthesis. In terms of biological role, cell wall formation. This Frankia casuarinae (strain DSM 45818 / CECT 9043 / HFP020203 / CcI3) protein is D-alanine--D-alanine ligase.